Here is a 401-residue protein sequence, read N- to C-terminus: Phosphoglycerate kinase (401 aa).

Residues 29-31 (DFN), Arg-45, 69-72 (HLGR), Arg-125, and Arg-158 contribute to the substrate site. ATP-binding positions include Lys-209, Glu-331, and 357-360 (GGDT).

It belongs to the phosphoglycerate kinase family. As to quaternary structure, monomer.

It is found in the cytoplasm. The catalysed reaction is (2R)-3-phosphoglycerate + ATP = (2R)-3-phospho-glyceroyl phosphate + ADP. Its pathway is carbohydrate degradation; glycolysis; pyruvate from D-glyceraldehyde 3-phosphate: step 2/5. In Wolinella succinogenes (strain ATCC 29543 / DSM 1740 / CCUG 13145 / JCM 31913 / LMG 7466 / NCTC 11488 / FDC 602W) (Vibrio succinogenes), this protein is Phosphoglycerate kinase.